The sequence spans 151 residues: Nucleoside diphosphate kinase (151 aa).

6 residues coordinate ATP: Lys-10, Phe-58, Arg-86, Thr-92, Arg-103, and Asn-113. His-116 (pros-phosphohistidine intermediate) is an active-site residue.

The protein belongs to the NDK family. As to quaternary structure, homotetramer. Mg(2+) serves as cofactor.

The protein localises to the cytoplasm. It catalyses the reaction dZDP + ATP = dZTP + ADP. It carries out the reaction a 2'-deoxyribonucleoside 5'-diphosphate + ATP = a 2'-deoxyribonucleoside 5'-triphosphate + ADP. The enzyme catalyses a ribonucleoside 5'-diphosphate + ATP = a ribonucleoside 5'-triphosphate + ADP. The protein operates within purine metabolism. Functionally, major role in the synthesis of nucleoside triphosphates other than ATP. The ATP gamma phosphate is transferred to the NDP beta phosphate via a ping-pong mechanism, using a phosphorylated active-site intermediate. In terms of biological role, (Microbial infection) Catalyzes the phosphorylation of dZDP to dZTP, when the bacterium is infected by a phage that produces the substrate for the synthesis of dZTP (2- amino-2'-deoxyadenosine 5'-triphosphate), which is then used by the phage as a DNA polymerase substrate. The chain is Nucleoside diphosphate kinase from Synechococcus sp. (strain CC9902).